The chain runs to 472 residues: Phosphoenolpyruvate carboxykinase (ATP), glycosomal (472 aa).

Residue 221 to 228 (GLSGTGKT) participates in ATP binding.

This sequence belongs to the phosphoenolpyruvate carboxykinase (ATP) family. Homodimer.

The protein localises to the glycosome. The enzyme catalyses oxaloacetate + ATP = phosphoenolpyruvate + ADP + CO2. It participates in carbohydrate biosynthesis; gluconeogenesis. P60 has the capability to bind to microtubules and membrane vesicles in vitro. The polypeptide is Phosphoenolpyruvate carboxykinase (ATP), glycosomal (Trypanosoma brucei brucei).